The chain runs to 132 residues: D-ribose pyranase (132 aa).

The active-site Proton donor is His-20. Residues Asp-28, His-98, and 121–123 (YSN) contribute to the substrate site.

The protein belongs to the RbsD / FucU family. RbsD subfamily. As to quaternary structure, homodecamer.

It localises to the cytoplasm. The enzyme catalyses beta-D-ribopyranose = beta-D-ribofuranose. The protein operates within carbohydrate metabolism; D-ribose degradation; D-ribose 5-phosphate from beta-D-ribopyranose: step 1/2. Catalyzes the interconversion of beta-pyran and beta-furan forms of D-ribose. In Kosmotoga olearia (strain ATCC BAA-1733 / DSM 21960 / TBF 19.5.1), this protein is D-ribose pyranase.